The following is a 534-amino-acid chain: Dolichol kinase (534 aa).

At 1-16 (MTRQCPPQESGAALSG) the chain is on the cytoplasmic side. Residues 17 to 37 (SVLAEAAVVFAVVLSIHAAVW) form a helical membrane-spanning segment. Over 38–72 (DRYSWCAVALAVQAFYVQYKWDRLLQQGNAVFQFR) the chain is Extracellular. Residues 73–93 (MSANSGLLPASMVMPLLGLVM) traverse the membrane as a helical segment. Topologically, residues 94–109 (KERCQTAGNPYFERFG) are cytoplasmic. A helical membrane pass occupies residues 110 to 130 (IVVAATGMAVALFSSVLALGI). At 131 to 132 (TR) the chain is on the extracellular side. Residues 133 to 153 (PVPTNTCAISGLAGGVIIYIM) form a helical membrane-spanning segment. The Cytoplasmic segment spans residues 154-161 (RHSLSVGE). A helical membrane pass occupies residues 162–182 (VIEVLEVLLIFVYLNMILLYL). At 183 to 186 (LPRC) the chain is on the extracellular side. The helical transmembrane segment at 187-207 (FTPGEALLVLGGISFVLNQLI) threads the bilayer. At 208–220 (KRSLTESQGDPVD) the chain is on the cytoplasmic side. Residues 221-241 (FFLLVVVVGMVLMGVFFSTLF) form a helical membrane-spanning segment. The Extracellular segment spans residues 242 to 252 (VFMDSGTWASS). Residues 253 to 273 (IFFHLMTCVLGLGVVLPWLHW) form a helical membrane-spanning segment. Residues 274–293 (LIRRNPLLWLLQFLFYTETR) are Cytoplasmic-facing. Residues 294 to 314 (IYLLAYWSLLASVACLVVLYQ) traverse the membrane as a helical segment. Topologically, residues 315–333 (NAKRSSSESKKHRAPTITR) are extracellular. The chain crosses the membrane as a helical span at residues 334 to 350 (KYFHFIVVATYIPGIIF). Topologically, residues 351 to 355 (DRPLL) are cytoplasmic. The chain crosses the membrane as a helical span at residues 356–376 (YVAATVCLAVFIFLEYVRYFR). The Extracellular portion of the chain corresponds to 377-397 (IKPLGHTLRSLLSLFLDERDS). Residues 398–418 (GPLILTHIYLLLGMSLPIWLI) traverse the membrane as a helical segment. Topologically, residues 419–432 (PRPCTQKDSLEGAR) are cytoplasmic. Residues 433-453 (ALVPYAGVLAVGVGDTVASIF) form a helical membrane-spanning segment. Topologically, residues 454–468 (GSTMGEIRWPGTKKT) are extracellular. The interval 455–470 (STMGEIRWPGTKKTFE) is CTP-binding. The helical transmembrane segment at 469-489 (FEGTMTSIFAQIISVALILIF) threads the bilayer. Residues 490 to 491 (DS) are Cytoplasmic-facing. A helical transmembrane segment spans residues 492–512 (GVDLNYSYAWILGSISTVSLL). Over 513 to 534 (EAYTTQIDNLLLPLYLLILLMA) the chain is Extracellular.

This sequence belongs to the polyprenol kinase family.

The protein resides in the endoplasmic reticulum membrane. It catalyses the reaction a di-trans,poly-cis-dolichol + CTP = a di-trans,poly-cis-dolichyl phosphate + CDP + H(+). It functions in the pathway protein modification; protein glycosylation. Functionally, catalyzes CTP-mediated phosphorylation of dolichol, the terminal step in de novo dolichyl monophosphate (Dol-P) biosynthesis. Dol-P is a lipid carrier essential for the synthesis of N-linked and O-linked oligosaccharides and for GPI anchors. This chain is Dolichol kinase, found in Mus musculus (Mouse).